A 371-amino-acid chain; its full sequence is tRNA-specific 2-thiouridylase MnmA (371 aa).

Residues Gly-13 to Ser-20 and Met-39 each bind ATP. An interaction with target base in tRNA region spans residues Asn-99–Asp-101. The Nucleophile role is filled by Cys-104. Cysteines 104 and 200 form a disulfide. Gly-128 contacts ATP. An interaction with tRNA region spans residues Lys-150–Gln-152. The Cysteine persulfide intermediate role is filled by Cys-200. The interval Arg-308 to Tyr-309 is interaction with tRNA.

This sequence belongs to the MnmA/TRMU family.

Its subcellular location is the cytoplasm. It carries out the reaction S-sulfanyl-L-cysteinyl-[protein] + uridine(34) in tRNA + AH2 + ATP = 2-thiouridine(34) in tRNA + L-cysteinyl-[protein] + A + AMP + diphosphate + H(+). Its function is as follows. Catalyzes the 2-thiolation of uridine at the wobble position (U34) of tRNA, leading to the formation of s(2)U34. The sequence is that of tRNA-specific 2-thiouridylase MnmA from Bacillus cytotoxicus (strain DSM 22905 / CIP 110041 / 391-98 / NVH 391-98).